The primary structure comprises 64 residues: Large ribosomal subunit protein uL29 (64 aa).

It belongs to the universal ribosomal protein uL29 family.

The sequence is that of Large ribosomal subunit protein uL29 from Ralstonia pickettii (strain 12J).